The primary structure comprises 428 residues: Probable protein phosphatase 2C 12 (428 aa).

One can recognise a PPM-type phosphatase domain in the interval 24–293 (KIDNPELIHG…DDTTCIVVDI (270 aa)). The Mn(2+) site is built by D69, G70, D245, and D284. The interval 301-331 (ASVPPPKKQGKGMLKSMFKRKTSDSSSNIEK) is disordered.

It belongs to the PP2C family. The cofactor is Mg(2+). It depends on Mn(2+) as a cofactor.

It carries out the reaction O-phospho-L-seryl-[protein] + H2O = L-seryl-[protein] + phosphate. The enzyme catalyses O-phospho-L-threonyl-[protein] + H2O = L-threonyl-[protein] + phosphate. This chain is Probable protein phosphatase 2C 12, found in Arabidopsis thaliana (Mouse-ear cress).